A 294-amino-acid polypeptide reads, in one-letter code: Elongation factor Ts (294 aa).

The segment at 82-85 is involved in Mg(2+) ion dislocation from EF-Tu; sequence TDFV.

It belongs to the EF-Ts family.

The protein localises to the cytoplasm. Functionally, associates with the EF-Tu.GDP complex and induces the exchange of GDP to GTP. It remains bound to the aminoacyl-tRNA.EF-Tu.GTP complex up to the GTP hydrolysis stage on the ribosome. This chain is Elongation factor Ts, found in Nitrosomonas eutropha (strain DSM 101675 / C91 / Nm57).